The sequence spans 333 residues: Isopenicillin N synthase (333 aa).

Residues Arg-87, Tyr-91, and Tyr-191 each contribute to the isopenicillin N site. The N-[(5S)-5-amino-5-carboxypentanoyl]-L-cysteinyl-D-valine site is built by Arg-87, Tyr-91, Tyr-191, His-216, and Asp-218. A Fe2OG dioxygenase domain is found at 180–290; it reads DTLSCRSLMI…RLSLPFFLHA (111 aa). Residues His-216, Asp-218, and His-272 each contribute to the Fe(2+) site. A 2-oxoglutarate-binding site is contributed by Arg-281. Ser-283 contributes to the isopenicillin N binding site. Ser-283 is an N-[(5S)-5-amino-5-carboxypentanoyl]-L-cysteinyl-D-valine binding site.

Belongs to the iron/ascorbate-dependent oxidoreductase family. Requires Fe cation as cofactor. L-ascorbate serves as cofactor.

The catalysed reaction is N-[(5S)-5-amino-5-carboxypentanoyl]-L-cysteinyl-D-valine + O2 = isopenicillin N + 2 H2O. The protein operates within antibiotic biosynthesis; penicillin G biosynthesis; penicillin G from L-alpha-aminoadipate and L-cysteine and L-valine: step 2/3. Functionally, removes, in the presence of oxygen, 4 hydrogen atoms from delta-L-(alpha-aminoadipyl)-L-cysteinyl-D-valine (ACV) to form the azetidinone and thiazolidine rings of isopenicillin. This chain is Isopenicillin N synthase (pcbC), found in Streptomyces microflavus (Streptomyces lipmanii).